The chain runs to 374 residues: Histidinol-phosphate aminotransferase (374 aa).

The residue at position 215 (K215) is an N6-(pyridoxal phosphate)lysine.

It belongs to the class-II pyridoxal-phosphate-dependent aminotransferase family. Histidinol-phosphate aminotransferase subfamily. Homodimer. Requires pyridoxal 5'-phosphate as cofactor.

The enzyme catalyses L-histidinol phosphate + 2-oxoglutarate = 3-(imidazol-4-yl)-2-oxopropyl phosphate + L-glutamate. It functions in the pathway amino-acid biosynthesis; L-histidine biosynthesis; L-histidine from 5-phospho-alpha-D-ribose 1-diphosphate: step 7/9. This is Histidinol-phosphate aminotransferase from Yersinia enterocolitica serotype O:8 / biotype 1B (strain NCTC 13174 / 8081).